A 352-amino-acid chain; its full sequence is Molybdenum import ATP-binding protein ModC (352 aa).

Positions 1 to 229 (MLELNFSQTL…SVMHPWLPKE (229 aa)) constitute an ABC transporter domain. 31-38 (GVSGAGKT) is a binding site for ATP. Residues 289 to 352 (QTSIRNVLRA…AQVKSVSITA (64 aa)) form the Mop domain.

This sequence belongs to the ABC transporter superfamily. Molybdate importer (TC 3.A.1.8) family. The complex is composed of two ATP-binding proteins (ModC), two transmembrane proteins (ModB) and a solute-binding protein (ModA).

It localises to the cell inner membrane. It carries out the reaction molybdate(out) + ATP + H2O = molybdate(in) + ADP + phosphate + H(+). In terms of biological role, part of the ABC transporter complex ModABC involved in molybdenum import. Responsible for energy coupling to the transport system. In Salmonella paratyphi A (strain ATCC 9150 / SARB42), this protein is Molybdenum import ATP-binding protein ModC.